Here is a 263-residue protein sequence, read N- to C-terminus: Indole-3-glycerol phosphate synthase (263 aa).

This sequence belongs to the TrpC family.

The catalysed reaction is 1-(2-carboxyphenylamino)-1-deoxy-D-ribulose 5-phosphate + H(+) = (1S,2R)-1-C-(indol-3-yl)glycerol 3-phosphate + CO2 + H2O. It participates in amino-acid biosynthesis; L-tryptophan biosynthesis; L-tryptophan from chorismate: step 4/5. This chain is Indole-3-glycerol phosphate synthase, found in Polaromonas naphthalenivorans (strain CJ2).